The sequence spans 496 residues: Pyrrole-2-carboxylic acid decarboxylase (496 aa).

Tryptophan 166 is a binding site for K(+). Prenylated FMN contacts are provided by valine 168, arginine 170, glutamine 187, and histidine 188. Residue histidine 188 participates in Mn(2+) binding. K(+) is bound by residues alanine 218, alanine 219, methionine 221, and glutamate 229. Glutamate 229 provides a ligand contact to prenylated FMN. Position 229 (glutamate 229) interacts with Mn(2+). The active-site Proton donor is glutamate 278. Histidine 386 provides a ligand contact to prenylated FMN.

This sequence belongs to the UbiD family. UbiD-like/FDC subfamily. Homodimer. The cofactor is prenylated FMN. It depends on Mn(2+) as a cofactor. K(+) is required as a cofactor.

It carries out the reaction pyrrole-2-carboxylate + H(+) = 1H-pyrrole + CO2. The catalysed reaction is pyrrole-2-carboxylate + H2O = 1H-pyrrole + hydrogencarbonate. With respect to regulation, imidazole acts as a reversible inhibitor via the formation of an imidazole-prenyl-FMN adduct. Activity is light sensitive. Catalyzes the prenyl-FMN-dependent decarboxylation of pyrrole-2-carboxylate (P2C). Can also catalyze the carboxylation of pyrrole in the presence of elevated concentrations of CO(2) or bicarbonate. Can accept a modest range of heteroaromatic compounds such as 3-methylpyrrole-2-carboxylate, indole-3-carboxylate and furan-2-carboxylate, and shows very low activity with thiophene-2-carboxylate. Attenuates the virulence of P.aeruginosa in a Drosophila model when overexpressed. The chain is Pyrrole-2-carboxylic acid decarboxylase from Pseudomonas aeruginosa (strain ATCC 15692 / DSM 22644 / CIP 104116 / JCM 14847 / LMG 12228 / 1C / PRS 101 / PAO1).